We begin with the raw amino-acid sequence, 369 residues long: tRNA 2-selenouridine synthase (369 aa).

The 125-residue stretch at 12 to 136 (FLDDIPLMDV…LRNFLFETTR (125 aa)) folds into the Rhodanese domain. C95 (S-selanylcysteine intermediate) is an active-site residue.

It belongs to the SelU family. As to quaternary structure, monomer.

It catalyses the reaction 5-methylaminomethyl-2-thiouridine(34) in tRNA + selenophosphate + (2E)-geranyl diphosphate + H2O + H(+) = 5-methylaminomethyl-2-selenouridine(34) in tRNA + (2E)-thiogeraniol + phosphate + diphosphate. It carries out the reaction 5-methylaminomethyl-2-thiouridine(34) in tRNA + (2E)-geranyl diphosphate = 5-methylaminomethyl-S-(2E)-geranyl-thiouridine(34) in tRNA + diphosphate. The enzyme catalyses 5-methylaminomethyl-S-(2E)-geranyl-thiouridine(34) in tRNA + selenophosphate + H(+) = 5-methylaminomethyl-2-(Se-phospho)selenouridine(34) in tRNA + (2E)-thiogeraniol. The catalysed reaction is 5-methylaminomethyl-2-(Se-phospho)selenouridine(34) in tRNA + H2O = 5-methylaminomethyl-2-selenouridine(34) in tRNA + phosphate. In terms of biological role, involved in the post-transcriptional modification of the uridine at the wobble position (U34) of tRNA(Lys), tRNA(Glu) and tRNA(Gln). Catalyzes the conversion of 2-thiouridine (S2U-RNA) to 2-selenouridine (Se2U-RNA). Acts in a two-step process involving geranylation of 2-thiouridine (S2U) to S-geranyl-2-thiouridine (geS2U) and subsequent selenation of the latter derivative to 2-selenouridine (Se2U) in the tRNA chain. In Pseudomonas aeruginosa (strain ATCC 15692 / DSM 22644 / CIP 104116 / JCM 14847 / LMG 12228 / 1C / PRS 101 / PAO1), this protein is tRNA 2-selenouridine synthase.